The chain runs to 319 residues: Bidirectional sugar transporter SWEET15 (319 aa).

Topologically, residues 1 to 10 (MAFMSMERST) are extracellular. Residues 11–31 (WAFTFGILGNLISLMVFLSPL) form a helical membrane-spanning segment. Positions 13–99 (FTFGILGNLI…AMYLAYAPKS (87 aa)) constitute a MtN3/slv 1 domain. At 32 to 50 (PTFYRVYRKKSTEGFQSTP) the chain is on the cytoplasmic side. Residues 51-71 (YVVTLFSCMLWMYYAFVKSGA) traverse the membrane as a helical segment. Glu-72 is a topological domain (extracellular). A helical transmembrane segment spans residues 73–93 (LLVTINGVGCVIETVYLAMYL). At 94-106 (AYAPKSARMLTAK) the chain is on the cytoplasmic side. A helical transmembrane segment spans residues 107–127 (MLLGLNIGLFGVIALVTLLLS). Residues 128–134 (RGELRVH) lie on the Extracellular side of the membrane. The chain crosses the membrane as a helical span at residues 135-155 (VLGWICVAVSLSVFAAPLSII). The 85-residue stretch at 135-219 (VLGWICVAVS…ALYMAYRSKK (85 aa)) folds into the MtN3/slv 2 domain. Topologically, residues 156–167 (RLVIRTKSVEFM) are cytoplasmic. Residues 168–188 (PFSLSFFLVLSAVIWFLYGLL) traverse the membrane as a helical segment. The Extracellular portion of the chain corresponds to 189–191 (KKD). A helical transmembrane segment spans residues 192–212 (VFVALPNVLGFVFGVAQMALY). The Cytoplasmic segment spans residues 213–319 (MAYRSKKPLV…KPDMAIVVEV (107 aa)).

This sequence belongs to the SWEET sugar transporter family. As to quaternary structure, forms homooligomers and/or heterooligomers.

The protein localises to the cell membrane. Mediates both low-affinity uptake and efflux of sugar across the plasma membrane. In terms of biological role, confers blight susceptibility. Confers TAL effector-mediated susceptibility to Xanthomonas oryzae pv. oryzae. The chain is Bidirectional sugar transporter SWEET15 (SWEET15) from Oryza sativa subsp. japonica (Rice).